The chain runs to 159 residues: 2-C-methyl-D-erythritol 2,4-cyclodiphosphate synthase (159 aa).

A divalent metal cation-binding residues include Asp-8 and His-10. Residues 8–10 (DVH) and 34–35 (HS) each bind 4-CDP-2-C-methyl-D-erythritol 2-phosphate. His-42 contacts a divalent metal cation. Residues 56–58 (DIG), 61–65 (FPDTD), 100–106 (AQAPKMA), 132–135 (TTTE), Phe-139, and Arg-142 each bind 4-CDP-2-C-methyl-D-erythritol 2-phosphate.

This sequence belongs to the IspF family. In terms of assembly, homotrimer. It depends on a divalent metal cation as a cofactor.

The enzyme catalyses 4-CDP-2-C-methyl-D-erythritol 2-phosphate = 2-C-methyl-D-erythritol 2,4-cyclic diphosphate + CMP. It functions in the pathway isoprenoid biosynthesis; isopentenyl diphosphate biosynthesis via DXP pathway; isopentenyl diphosphate from 1-deoxy-D-xylulose 5-phosphate: step 4/6. Involved in the biosynthesis of isopentenyl diphosphate (IPP) and dimethylallyl diphosphate (DMAPP), two major building blocks of isoprenoid compounds. Catalyzes the conversion of 4-diphosphocytidyl-2-C-methyl-D-erythritol 2-phosphate (CDP-ME2P) to 2-C-methyl-D-erythritol 2,4-cyclodiphosphate (ME-CPP) with a corresponding release of cytidine 5-monophosphate (CMP). The sequence is that of 2-C-methyl-D-erythritol 2,4-cyclodiphosphate synthase from Cronobacter sakazakii (strain ATCC BAA-894) (Enterobacter sakazakii).